The following is a 1404-amino-acid chain: DNA-directed RNA polymerase subunit beta' (1404 aa).

Zn(2+) contacts are provided by cysteine 70, cysteine 72, cysteine 85, and cysteine 88. Residues aspartate 458, aspartate 460, and aspartate 462 each coordinate Mg(2+). Residues cysteine 813, cysteine 887, cysteine 894, and cysteine 897 each contribute to the Zn(2+) site. Residues 1377–1404 are disordered; sequence ERRAIAESEAAELEASQAETSDENAAAE.

The protein belongs to the RNA polymerase beta' chain family. As to quaternary structure, the RNAP catalytic core consists of 2 alpha, 1 beta, 1 beta' and 1 omega subunit. When a sigma factor is associated with the core the holoenzyme is formed, which can initiate transcription. The cofactor is Mg(2+). It depends on Zn(2+) as a cofactor.

It catalyses the reaction RNA(n) + a ribonucleoside 5'-triphosphate = RNA(n+1) + diphosphate. Functionally, DNA-dependent RNA polymerase catalyzes the transcription of DNA into RNA using the four ribonucleoside triphosphates as substrates. The polypeptide is DNA-directed RNA polymerase subunit beta' (Polaromonas naphthalenivorans (strain CJ2)).